A 297-amino-acid polypeptide reads, in one-letter code: N-acetylmuramic acid 6-phosphate etherase (297 aa).

Positions 56-219 (AIEAFNKGGR…STISMIGIGK (164 aa)) constitute an SIS domain. The active-site Proton donor is the E84. Residue E115 is part of the active site.

Belongs to the GCKR-like family. MurNAc-6-P etherase subfamily. As to quaternary structure, homodimer.

It carries out the reaction N-acetyl-D-muramate 6-phosphate + H2O = N-acetyl-D-glucosamine 6-phosphate + (R)-lactate. It participates in amino-sugar metabolism; N-acetylmuramate degradation. Specifically catalyzes the cleavage of the D-lactyl ether substituent of MurNAc 6-phosphate, producing GlcNAc 6-phosphate and D-lactate. This Lactococcus lactis subsp. cremoris (strain MG1363) protein is N-acetylmuramic acid 6-phosphate etherase.